The chain runs to 442 residues: HTH-type transcriptional regulator NorG (442 aa).

The region spanning 2–46 (KIPSQRQLAIQYNVNRVTIIKSIELLEAEGFIYTKVGSGTYVNDY) is the HTH gntR-type domain. Positions 6 to 25 (QRQLAIQYNVNRVTIIKSIE) form a DNA-binding region, H-T-H motif. Lysine 288 carries the N6-(pyridoxal phosphate)lysine modification.

The protein in the C-terminal section; belongs to the class-I pyridoxal-phosphate-dependent aminotransferase family. The cofactor is pyridoxal 5'-phosphate.

Positively regulates the expression of the NorB efflux pump and negatively regulates the expression of the AbcA efflux pump. Binds specifically to the promoters of norA, norB and norC and abcA genes. Could also have an aminotransferase activity. The protein is HTH-type transcriptional regulator NorG (norG) of Staphylococcus aureus (strain bovine RF122 / ET3-1).